Reading from the N-terminus, the 216-residue chain is Somatotropin (216 aa).

Positions 1 to 26 (MATGSQTSWLLTFTLLCLPWPQEAGA) are cleaved as a signal peptide. His-45 lines the Zn(2+) pocket. An intrachain disulfide couples Cys-78 to Cys-189. At Ser-131 the chain carries Phosphoserine. Position 198 (Glu-198) interacts with Zn(2+). A disulfide bridge connects residues Cys-206 and Cys-214.

It belongs to the somatotropin/prolactin family.

Its subcellular location is the secreted. Functionally, plays an important role in growth control. Its major role in stimulating body growth is to stimulate the liver and other tissues to secrete IGF1. It stimulates both the differentiation and proliferation of myoblasts. It also stimulates amino acid uptake and protein synthesis in muscle and other tissues. The polypeptide is Somatotropin (GH1) (Spalax ehrenbergi (Middle East blind mole rat)).